The primary structure comprises 255 residues: MFPALSSERVLVLIPARMAATRLPGKPLADVGGRPMIVEVARRAAAAAIGPVAVATDSEEIAAAVRAAGVTAVLTRADHPSGSDRIFEALGALDPDGAVDVVVNVQGDLPTIAPQTIRSALAPLAEPAVDIATLCAEIVVEDERTDPNVVKVVGSPLDDNLLRALYFTRATAPFGAGPLYHHIGLYAYRRPALARFVALAPSMLEQREKLEQLRALEAGMRIDVAVVDAVPLGVDTQAHLDRARAILALEAAEQK.

This sequence belongs to the KdsB family.

It localises to the cytoplasm. The catalysed reaction is 3-deoxy-alpha-D-manno-oct-2-ulosonate + CTP = CMP-3-deoxy-beta-D-manno-octulosonate + diphosphate. It participates in nucleotide-sugar biosynthesis; CMP-3-deoxy-D-manno-octulosonate biosynthesis; CMP-3-deoxy-D-manno-octulosonate from 3-deoxy-D-manno-octulosonate and CTP: step 1/1. It functions in the pathway bacterial outer membrane biogenesis; lipopolysaccharide biosynthesis. Its function is as follows. Activates KDO (a required 8-carbon sugar) for incorporation into bacterial lipopolysaccharide in Gram-negative bacteria. In Xanthobacter autotrophicus (strain ATCC BAA-1158 / Py2), this protein is 3-deoxy-manno-octulosonate cytidylyltransferase.